The primary structure comprises 284 residues: D-tagatose-1,6-bisphosphate aldolase subunit GatY (284 aa).

Residue aspartate 82 is the Proton donor of the active site. Positions 83 and 180 each coordinate Zn(2+). Residue glycine 181 coordinates dihydroxyacetone phosphate. Histidine 208 contacts Zn(2+). Dihydroxyacetone phosphate-binding positions include 209 to 211 (GAS) and 230 to 233 (NVAT).

The protein belongs to the class II fructose-bisphosphate aldolase family. TagBP aldolase GatY subfamily. In terms of assembly, forms a complex with GatZ. It depends on Zn(2+) as a cofactor.

The catalysed reaction is D-tagatofuranose 1,6-bisphosphate = D-glyceraldehyde 3-phosphate + dihydroxyacetone phosphate. Its pathway is carbohydrate metabolism; D-tagatose 6-phosphate degradation; D-glyceraldehyde 3-phosphate and glycerone phosphate from D-tagatose 6-phosphate: step 2/2. In terms of biological role, catalytic subunit of the tagatose-1,6-bisphosphate aldolase GatYZ, which catalyzes the reversible aldol condensation of dihydroxyacetone phosphate (DHAP or glycerone-phosphate) with glyceraldehyde 3-phosphate (G3P) to produce tagatose 1,6-bisphosphate (TBP). Requires GatZ subunit for full activity and stability. Is involved in the catabolism of galactitol. This is D-tagatose-1,6-bisphosphate aldolase subunit GatY from Salmonella choleraesuis (strain SC-B67).